We begin with the raw amino-acid sequence, 232 residues long: U2 small nuclear ribonucleoprotein B'' (232 aa).

The RRM 1 domain maps to 10–89; that stretch reads QTVYLRNLNE…KRMRVQYAKT (80 aa). Residues 90–159 are disordered; it reads RSDCLATEDG…QEPPAPPNNI (70 aa). A compositionally biased stretch (basic and acidic residues) spans 108–123; that stretch reads KKQEEKAAEKKRRAEE. Residues 127–151 show a composition bias toward polar residues; sequence SGPNAAAQSNGTGYQASRLGKTSQE. One can recognise an RRM 2 domain in the interval 158-232; sequence NILFIQNLPA…NPMAISYAKK (75 aa).

It belongs to the RRM U1 A/B'' family. As to quaternary structure, component of the spliceosome where it is associated with snRNP U2.

The protein resides in the nucleus. The protein localises to the cajal body. It localises to the nucleoplasm. Its subcellular location is the cytoplasm. Involved in nuclear pre-mRNA splicing. The chain is U2 small nuclear ribonucleoprotein B'' from Oryza sativa subsp. japonica (Rice).